Here is a 1612-residue protein sequence, read N- to C-terminus: DNA topoisomerase 2-beta (1612 aa).

Position 2 is an N-acetylalanine (Ala-2). The residue at position 3 (Lys-3) is an N6-acetyllysine. Glycyl lysine isopeptide (Lys-Gly) (interchain with G-Cter in SUMO2) cross-links involve residues Lys-21 and Lys-22. ATP is bound by residues Asn-100, Asn-129, and 157–159; that span reads SSN. Glycyl lysine isopeptide (Lys-Gly) (interchain with G-Cter in SUMO2) cross-links involve residues Lys-165 and Lys-166. 170-177 contacts ATP; the sequence is GRNGYGAK. Glycyl lysine isopeptide (Lys-Gly) (interchain with G-Cter in SUMO2) cross-links involve residues Lys-216 and Lys-287. The interval 351–353 is interaction with DNA; that stretch reads KKK. Residues Lys-355 and Lys-361 each participate in a glycyl lysine isopeptide (Lys-Gly) (interchain with G-Cter in SUMO2) cross-link. 385–387 provides a ligand contact to ATP; it reads QTK. Glycyl lysine isopeptide (Lys-Gly) (interchain with G-Cter in SUMO2) cross-links involve residues Lys-425, Lys-427, and Lys-434. The Toprim domain occupies 464–581; the sequence is CTLILTEGDS…SLLKHGFLEE (118 aa). Glu-470, Asp-550, and Asp-552 together coordinate Mg(2+). Glycyl lysine isopeptide (Lys-Gly) (interchain with G-Cter in SUMO2) cross-links involve residues Lys-588, Lys-593, Lys-623, Lys-631, Lys-634, Lys-664, and Lys-700. Residues 724–1177 enclose the Topo IIA-type catalytic domain; it reads IPSLVDGFKP…SPSDLWKEDL (454 aa). Tyr-814 serves as the catalytic O-(5'-phospho-DNA)-tyrosine intermediate. The segment at 999 to 1008 is interaction with DNA; the sequence is KLQTTLTCNS. Lys-1080 participates in a covalent cross-link: Glycyl lysine isopeptide (Lys-Gly) (interchain with G-Cter in SUMO2). The disordered stretch occupies residues 1098–1128; the sequence is AWKEAQEKAAEEEDTQNQHDDSSSDSGTPSG. Residues Lys-1202, Lys-1205, Lys-1214, and Lys-1215 each participate in a glycyl lysine isopeptide (Lys-Gly) (interchain with G-Cter in SUMO2) cross-link. Position 1224 is a phosphoserine (Ser-1224). Residues Lys-1238, Lys-1250, and Lys-1259 each participate in a glycyl lysine isopeptide (Lys-Gly) (interchain with G-Cter in SUMO2) cross-link. Positions 1245-1586 are disordered; the sequence is LLKKKKGDPD…FTSEPPALPR (342 aa). Residue Thr-1280 is modified to Phosphothreonine. Residues Lys-1311 and Lys-1315 each participate in a glycyl lysine isopeptide (Lys-Gly) (interchain with G-Cter in SUMO2) cross-link. Basic and acidic residues-rich tracts occupy residues 1322-1332 and 1346-1358; these read PWSDDESKSES and SLLRRAAAERPKY. Ser-1324, Ser-1328, Ser-1330, Ser-1332, and Ser-1346 each carry phosphoserine. Tyr-1358 carries the post-translational modification Phosphotyrosine. The segment covering 1362 to 1379 has biased composition (acidic residues); the sequence is FSEEEEEDADDDDDNNDL. Residue Ser-1363 is modified to Phosphoserine. Lys-1385 is covalently cross-linked (Glycyl lysine isopeptide (Lys-Gly) (interchain with G-Cter in SUMO2)). Phosphoserine is present on Ser-1387. Thr-1390 carries the phosphothreonine modification. Ser-1400 is modified (phosphoserine). A Phosphotyrosine modification is found at Tyr-1408. At Ser-1411 the chain carries Phosphoserine. Residues 1417 to 1429 are compositionally biased toward basic and acidic residues; that stretch reads ATPEKSSHDKKSQ. Lys-1427 participates in a covalent cross-link: Glycyl lysine isopeptide (Lys-Gly) (interchain with G-Cter in SUMO2). Ser-1428, Ser-1439, and Ser-1441 each carry phosphoserine. Lys-1443 participates in a covalent cross-link: Glycyl lysine isopeptide (Lys-Gly) (interchain with G-Cter in SUMO2). A compositionally biased stretch (basic and acidic residues) spans 1443 to 1453; the sequence is KSEDDSAKFDS. 3 positions are modified to phosphoserine: Ser-1448, Ser-1453, and Ser-1460. A Glycyl lysine isopeptide (Lys-Gly) (interchain with G-Cter in SUMO2) cross-link involves residue Lys-1477. Residues 1493-1499 form an interaction with PLSCR1 region; sequence KAKRAPK. Residues Ser-1509, Ser-1511, and Ser-1513 each carry the phosphoserine modification. The segment covering 1526–1536 has biased composition (basic residues); sequence GKGRGAKKRKA. A phosphoserine mark is found at Ser-1537 and Ser-1539. A compositionally biased stretch (basic residues) spans 1550 to 1561; sequence KPSKTASKKPKK. Thr-1562 is modified (phosphothreonine). Phosphoserine occurs at positions 1563 and 1568. A Phosphotyrosine modification is found at Tyr-1596. Phosphoserine is present on Ser-1600.

This sequence belongs to the type II topoisomerase family. In terms of assembly, homodimer. Interacts with PLSCR1 and KIAA1210. Mg(2+) is required as a cofactor. The cofactor is Mn(2+). Ca(2+) serves as cofactor.

The protein localises to the nucleus. It localises to the nucleolus. Its subcellular location is the nucleoplasm. It catalyses the reaction ATP-dependent breakage, passage and rejoining of double-stranded DNA.. In terms of biological role, key decatenating enzyme that alters DNA topology by binding to two double-stranded DNA molecules, generating a double-stranded break in one of the strands, passing the intact strand through the broken strand, and religating the broken strand. The protein is DNA topoisomerase 2-beta (TOP2B) of Cricetulus longicaudatus (Long-tailed dwarf hamster).